The sequence spans 1681 residues: Probable clathrin heavy chain 1 (1681 aa).

7 WD40-like repeat regions span residues 22–65 (NITF…RPIS), 66–105 (ADSVIMHPTAKILALKSGKTLQIFNIELKAKVKAHQNVED), 106–147 (VVYW…QSLA), 148–193 (GTQI…QPIE), 194–255 (GHAA…ADTA), 256–299 (GDFP…ISTD), and 300–328 (TVFVTCEYTATGGIMGINRKGQVLSVSID). CHCR repeat units lie at residues 539–685 (SENG…QVVV), 688–830 (ASKY…SEDA), 835–974 (IINT…QLID), 981–1126 (LSET…VKEA), 1130–1271 (FIKA…FRLA), 1276–1422 (LHIV…LLLN), and 1425–1568 (LTVL…YDCF). The span at 1616–1628 (ERSEHERKEEKAE) shows a compositional bias: basic and acidic residues. The disordered stretch occupies residues 1616-1635 (ERSEHERKEEKAEQQQNNGM).

It belongs to the clathrin heavy chain family. In terms of assembly, clathrin triskelions, composed of 3 heavy chains and 3 light chains, are the basic subunits of the clathrin coat. May interact with beta arrestin arr-1.

It localises to the cytoplasmic vesicle membrane. The protein localises to the membrane. It is found in the coated pit. Clathrin is the major protein of the polyhedral coat of coated pits and vesicles. May play a role in yolk protein clatherin-mediated endocytosis by oocytes during oogenesis. This is Probable clathrin heavy chain 1 (chc-1) from Caenorhabditis elegans.